A 92-amino-acid polypeptide reads, in one-letter code: Ferredoxin-like protein in nif region (92 aa).

2 consecutive 4Fe-4S ferredoxin-type domains span residues 2–28 (ALKIVESCVNCWACVDVCPSEAISLAG) and 29–65 (PHFEISASKCTECDGDYAEKQCASICPVEGAILLADG). [4Fe-4S] cluster contacts are provided by C9, C12, C15, C19, C38, C41, C50, and C54.

Requires [4Fe-4S] cluster as cofactor.

Its function is as follows. Ferredoxins are iron-sulfur proteins that transfer electrons in a wide variety of metabolic reactions. The sequence is that of Ferredoxin-like protein in nif region from Azotobacter vinelandii.